The sequence spans 442 residues: Inner membrane protein PPF-1, chloroplastic (442 aa).

Residues 1 to 108 (MAKTLISSPS…EFVLKVLKDG (108 aa)) are Lumenal-facing. The helical transmembrane segment at 109–129 (LSSVHVPYSYGFAIILLTVIV) threads the bilayer. The Stromal portion of the chain corresponds to 130 to 183 (KAATLPLTKQQVESTLAMQNLQPKIKAIQERYAGNQERIQLETSRLYTQAGVNP). A helical transmembrane segment spans residues 184 to 204 (LAGCLPTLATIPVWIGLYQAL). Residues 205 to 296 (SNVANEGLLT…QKNTLLIFKF (92 aa)) lie on the Lumenal side of the membrane. The helical transmembrane segment at 297-317 (LPLMIGYFSLSVPSGLTIYWF) threads the bilayer. The Stromal segment spans residues 318–442 (TNNVLSTAQQ…SKRSKRKPVA (125 aa)). 2 disordered regions span residues 350-371 (AGQAKRSASKPEKGGERFRQLK) and 390-442 (PLAS…KPVA). Basic and acidic residues predominate over residues 358–371 (SKPEKGGERFRQLK). A compositionally biased stretch (polar residues) spans 414–427 (ESNTSKVSQEVQSF). The span at 431-442 (RRSKRSKRKPVA) shows a compositional bias: basic residues.

It belongs to the OXA1/ALB3/YidC (TC 2.A.9.2) family. In terms of tissue distribution, highly expressed in apical buds. Low levels of expression in leaves. Not expressed in roots, and stems.

Its subcellular location is the plastid. The protein localises to the chloroplast thylakoid membrane. In terms of biological role, may be required for the insertion of some integral membrane proteins into the chloroplast thylakoid membrane. May play a role in inhibiting senescence. The chain is Inner membrane protein PPF-1, chloroplastic (PPF-1) from Pisum sativum (Garden pea).